The primary structure comprises 217 residues: Meiotic expression up-regulated protein 29 (217 aa).

Positions 1 to 21 are cleaved as a signal peptide; sequence MFVVKTAVLLFFALFIGNTYA. Over 22–133 the chain is Extracellular; sequence YTYSLDRIQA…SGVLLHRPWK (112 aa). N84 carries N-linked (GlcNAc...) asparagine glycosylation. Residues 134–154 form a helical membrane-spanning segment; the sequence is LFSLKPFTAAFVLLLAASYLA. Topologically, residues 155-217 are cytoplasmic; the sequence is TACFRMLGYL…VPVPVLDESV (63 aa).

It localises to the membrane. This is Meiotic expression up-regulated protein 29 (meu29) from Schizosaccharomyces pombe (strain 972 / ATCC 24843) (Fission yeast).